A 327-amino-acid chain; its full sequence is Methionine import ATP-binding protein MetN (327 aa).

The ABC transporter domain occupies 3–239 (VELKNIEKIY…PKHAVTKELI (237 aa)). 36-43 (GYSGAGKS) is an ATP binding site.

Belongs to the ABC transporter superfamily. Methionine importer (TC 3.A.1.24) family. The complex is composed of two ATP-binding proteins (MetN), two transmembrane proteins (MetI) and a solute-binding protein (MetQ).

It localises to the cell inner membrane. The catalysed reaction is L-methionine(out) + ATP + H2O = L-methionine(in) + ADP + phosphate + H(+). It catalyses the reaction D-methionine(out) + ATP + H2O = D-methionine(in) + ADP + phosphate + H(+). Functionally, part of the ABC transporter complex MetNIQ involved in methionine import. Responsible for energy coupling to the transport system. This Helicobacter acinonychis (strain Sheeba) protein is Methionine import ATP-binding protein MetN.